A 391-amino-acid polypeptide reads, in one-letter code: Secreted aspartic protease 1 (391 aa).

The signal sequence occupies residues M1–A18. Positions S19–R50 are cleaved as a propeptide — activation peptide. Residue N40 is glycosylated (N-linked (GlcNAc...) asparagine). Positions Y64 to A377 constitute a Peptidase A1 domain. The active site involves D82. D82–G84 serves as a coordination point for pepstatin A. C97 and C109 are disulfide-bonded. Residue G135 to D136 participates in pepstatin A binding. Residues D241 and D263 each contribute to the Zn(2+) site. The active site involves D267. D267–T271 serves as a coordination point for pepstatin A. An intrachain disulfide couples C305 to C343.

The protein belongs to the peptidase A1 family. Monomer.

It is found in the secreted. The catalysed reaction is Preferential cleavage at the carboxyl of hydrophobic amino acids, but fails to cleave 15-Leu-|-Tyr-16, 16-Tyr-|-Leu-17 and 24-Phe-|-Phe-25 of insulin B chain. Activates trypsinogen, and degrades keratin.. With respect to regulation, inhibited by pepstatin A analogs and squash aspartic peptidase inhibitor (SQAPI). Functionally, secreted aspartic peptidases (SAPs) are a group of ten acidic hydrolases considered as key virulence factors. These enzymes supply the fungus with nutrient amino acids as well as are able to degrade the selected host's proteins involved in the immune defense. Induces host inflammatory cytokine production in a proteolytic activity-independent way. Plays a role in tissue damage during superficial infection. Moreover, acts toward human hemoglobin though limited proteolysis to generate a variety of antimicrobial hemocidins, enabling to compete with the other microorganisms of the same physiological niche using the microbicidal peptides generated from the host protein. Plays a key role in defense against host by cleaving histatin-5 (Hst 5), a peptide from human saliva that carries out fungicidal activity. The cleavage rate decreases in an order of SAP2 &gt; SAP9 &gt; SAP3 &gt; SAP7 &gt; SAP4 &gt; SAP1 &gt; SAP8. The first cleavage occurs between residues 'Lys-17' and 'His-18' of Hst 5, giving DSHAKRHHGYKRKFHEK and HHSHRGY peptides. Further fragmentation by SAP1 results in AKRHHGYKRKFHEK and AKRHHGY products. This Candida albicans (strain SC5314 / ATCC MYA-2876) (Yeast) protein is Secreted aspartic protease 1.